The primary structure comprises 47 residues: PhoP/PhoQ regulator MgrB (47 aa).

Residues 6 to 26 (WVALVVVVLACLLLWAQVFNM) form a helical membrane-spanning segment.

This sequence belongs to the MgrB family. In terms of assembly, may form homooligomers. Probably interacts with the periplasmic domain of PhoQ.

Its subcellular location is the cell inner membrane. In terms of biological role, phoP-regulated transcription is redox-sensitive, being activated when the periplasm becomes more reducing. MgrB acts between DsbA/DsbB and PhoP/PhoQ in this pathway. Represses PhoP/PhoQ signaling, possibly by binding to the periplasmic domain of PhoQ, altering its activity and that of downstream effector PhoP. This Escherichia coli O127:H6 (strain E2348/69 / EPEC) protein is PhoP/PhoQ regulator MgrB.